A 138-amino-acid polypeptide reads, in one-letter code: Basic phospholipase A2 B (138 aa).

Residues 1 to 16 (MRALWIVAVLLLGVEG) form the signal peptide. 7 disulfides stabilise this stretch: C42–C131, C44–C60, C59–C111, C65–C138, C66–C104, C73–C97, and C91–C102. Ca(2+)-binding residues include Y43, G45, and G47. The active site involves H63. Ca(2+) is bound at residue D64. The active site involves D105.

It belongs to the phospholipase A2 family. Group II subfamily. D49 sub-subfamily. Ca(2+) serves as cofactor. As to expression, expressed by the venom gland.

The protein localises to the secreted. It carries out the reaction a 1,2-diacyl-sn-glycero-3-phosphocholine + H2O = a 1-acyl-sn-glycero-3-phosphocholine + a fatty acid + H(+). Functionally, snake venom phospholipase A2 (PLA2) that shows potent hemolytic activity, and exhibits medium anticoagulant effects by binding to factor Xa (F10) and inhibiting the prothrombinase activity (IC(50) is 90 nM). It is one of the few phospholipases A2 capable of hydrolyzing the phospholipids of E.coli membranes in the presence of a bactericidal/permeability-increasing protein (BPI) of neutrophils. PLA2 catalyzes the calcium-dependent hydrolysis of the 2-acyl groups in 3-sn-phosphoglycerides. The polypeptide is Basic phospholipase A2 B (Gloydius halys (Chinese water mocassin)).